The chain runs to 99 residues: Bublin coiled-coil protein (99 aa).

Residues 34–71 (LDQINSCLDDIEERNDALNGKLQELLESNRAARRDFRQ) are a coiled coil. The segment covering 66-78 (RRDFRQQITDHAD) has biased composition (basic and acidic residues). The interval 66–99 (RRDFRQQITDHADLPPPANDDDEDEQSRDAQKKD) is disordered.

Belongs to the UPF0184 (EST00098) family.

It is found in the cell junction. The protein localises to the cytoplasm. It localises to the cytoskeleton. Essential for intermediate filament organization in intestinal cells, interacts with intermediate filament and regulates intestinal lumen morphology. This chain is Bublin coiled-coil protein (bbln), found in Danio rerio (Zebrafish).